A 105-amino-acid chain; its full sequence is Large ribosomal subunit protein bL21 (105 aa).

Belongs to the bacterial ribosomal protein bL21 family. In terms of assembly, part of the 50S ribosomal subunit. Contacts protein L20.

In terms of biological role, this protein binds to 23S rRNA in the presence of protein L20. This chain is Large ribosomal subunit protein bL21, found in Thermotoga maritima (strain ATCC 43589 / DSM 3109 / JCM 10099 / NBRC 100826 / MSB8).